Consider the following 300-residue polypeptide: Ribosomal protein L11 methyltransferase (300 aa).

Thr-152, Gly-173, Asp-195, and Asn-234 together coordinate S-adenosyl-L-methionine.

Belongs to the methyltransferase superfamily. PrmA family.

The protein localises to the cytoplasm. It carries out the reaction L-lysyl-[protein] + 3 S-adenosyl-L-methionine = N(6),N(6),N(6)-trimethyl-L-lysyl-[protein] + 3 S-adenosyl-L-homocysteine + 3 H(+). Methylates ribosomal protein L11. The polypeptide is Ribosomal protein L11 methyltransferase (Burkholderia cenocepacia (strain ATCC BAA-245 / DSM 16553 / LMG 16656 / NCTC 13227 / J2315 / CF5610) (Burkholderia cepacia (strain J2315))).